A 103-amino-acid chain; its full sequence is Ig lambda chain C region (103 aa).

In terms of domain architecture, Ig-like spans 6 to 99; that stretch reads PTITLFPPSK…NGTSITKTLK (94 aa). Cys28 and Cys85 are oxidised to a cystine.

This Gallus gallus (Chicken) protein is Ig lambda chain C region.